The sequence spans 3336 residues: Pericentrin (3336 aa).

Disordered regions lie at residues 1-71 (MEVE…DICK) and 81-100 (GAGGAFAAQPEDCDGEKRED). Basic and acidic residues predominate over residues 27–37 (TKGDSSHSEKK). At S44 the chain carries Phosphoserine. Phosphoserine is present on S188. The residue at position 191 (T191) is a Phosphothreonine. The stretch at 258–553 (HTAQLELTQA…RLQGAREDAL (296 aa)) forms a coiled coil. The tract at residues 569–589 (KPEKGRKDHVDELEPERHKES) is disordered. 2 positions are modified to phosphoserine: S610 and S682. Coiled coils occupy residues 675 to 835 (TEHK…DALH) and 1010 to 1146 (TILT…MLKA). Phosphoserine is present on S1245. Residues 1299–1949 (NEETAQVVRK…FLRCQVELDR (651 aa)) are a coiled coil. Residues 1619–1638 (TLDAGRCPEPPSGSPPEGPE) form a disordered region. Residues 1626 to 1636 (PEPPSGSPPEG) show a composition bias toward pro residues. 2 positions are modified to phosphoserine: S1653 and S1712. A disordered region spans residues 1954 to 1974 (RATAHTRVPGAHPQPRMDGGA). Position 2044 is a phosphoserine (S2044). Residues 2064–2082 (VDLVAQVKQLQEKLNRLLY) adopt a coiled-coil conformation. The interval 2168–2214 (SLIPDEMPDSPIQEKSECQDMSLSSPTSVLGGSRHQSHTAEAGPRKS) is disordered. S2177, S2192, S2225, S2226, and S2327 each carry phosphoserine. Polar residues predominate over residues 2186–2197 (QDMSLSSPTSVL). Residues 2318–2374 (SFDSQETLSSPPPGLEGKADRSEKSDGSGFGARLSPGSGGPEAQTAGPVTPASISGR) form a disordered region. A compositionally biased stretch (basic and acidic residues) spans 2334–2343 (GKADRSEKSD). A phosphoserine mark is found at S2352, S2355, S2477, and S2486. A coiled-coil region spans residues 2536–3086 (QEKLQHLRTA…EKLLKHHLQK (551 aa)). Disordered regions lie at residues 2875 to 2910 (LEQSHPRLKEQEGRKAARRSAEARQSPAAAEQWRKW) and 3084 to 3126 (LQKG…EEAH). Basic and acidic residues-rich tracts occupy residues 2876–2896 (EQSHPRLKEQEGRKAARRSAE) and 3092–3102 (RSERSAWKPDE). The tract at residues 2983–3246 (LSAARLLTSF…ARQPQSPPRT (264 aa)) is interaction with NEK2. Residues 3195–3208 (RFRTAVRVVIAILR) form a calmodulin-binding region. The disordered stretch occupies residues 3224 to 3300 (ALAQGKAPRP…RSLTASQDPE (77 aa)). Over residues 3226–3240 (AQGKAPRPGPRARQP) the composition is skewed to low complexity. Polar residues predominate over residues 3283–3297 (PSPNSRLERSLTASQ). The residue at position 3302 (S3302) is a Phosphoserine.

As to quaternary structure, interacts with CHD3. Interacts with CHD4; the interaction regulates centrosome integrity. Interacts with DISC1 and PCM1. Binds calmodulin. Interacts with CDK5RAP2; the interaction is leading to centrosomal localization of PCNT and CDK5RAP2. Interacts with isoform 1 of NEK2. Interacts with CEP131. Interacts with CCDC13. Interacts with CEP68. Interacts with ATF5; the ATF5:PCNT:polyglutamylated tubulin (PGT) tripartite unites the mother centriole and the pericentriolar material (PCM) in the centrosome. In terms of processing, cleaved during mitotis which leads to removal of CDK5RAP2 from the centrosome and promotes centriole disengagement and subsequent centriole separation. The C-terminal fragment is rapidly degraded following cleavage. Ubiquitinated by TRIM43; leading to proteasomal degradation. As to expression, expressed in all tissues tested, including placenta, liver, kidney and thymus.

It is found in the cytoplasm. Its subcellular location is the cytoskeleton. The protein resides in the microtubule organizing center. It localises to the centrosome. Its function is as follows. Integral component of the filamentous matrix of the centrosome involved in the initial establishment of organized microtubule arrays in both mitosis and meiosis. Plays a role, together with DISC1, in the microtubule network formation. Is an integral component of the pericentriolar material (PCM). May play an important role in preventing premature centrosome splitting during interphase by inhibiting NEK2 kinase activity at the centrosome. In Homo sapiens (Human), this protein is Pericentrin (PCNT).